The sequence spans 697 residues: Transmembrane protein 168 (697 aa).

The next 3 membrane-spanning stretches (helical) occupy residues 36 to 56 (LGYL…YVRW), 63 to 83 (LILV…ILYY), and 89 to 109 (AASL…LCFL). N-linked (GlcNAc...) asparagine glycosylation is present at asparagine 111. Transmembrane regions (helical) follow at residues 172–192 (MLVE…MLII), 199–219 (FLAI…SLET), 223–243 (PIAF…DIYF), 265–285 (LSVV…AFKL), 293–313 (FVIP…IIFL), 352–372 (FCLI…ILGA), and 380–400 (GIFL…HGLF). Residues asparagine 533 and asparagine 598 are each glycosylated (N-linked (GlcNAc...) asparagine). A helical transmembrane segment spans residues 646-666 (ITYPLVHLANWLCGLNLFWIC).

This sequence belongs to the TMEM168 family.

It localises to the nucleus membrane. Functionally, plays a key role in maintaining the cardiac electrical stability by modulating cell surface expression of SCN5A. May play a role in the modulation of anxiety behavior by regulating GABAergic neuronal system in the nucleus accumbens. The sequence is that of Transmembrane protein 168 from Homo sapiens (Human).